We begin with the raw amino-acid sequence, 66 residues long: Photosystem II reaction center protein J (66 aa).

The chain crosses the membrane as a helical span at residues 36 to 56 (LWLVATAGGIAVIFVLGIFFY).

The protein belongs to the PsbJ family. PSII is composed of 1 copy each of membrane proteins PsbA, PsbB, PsbC, PsbD, PsbE, PsbF, PsbH, PsbI, PsbJ, PsbK, PsbL, PsbM, PsbT, PsbX, PsbY, Psb30/Ycf12, peripheral proteins PsbO, CyanoQ (PsbQ), PsbU, PsbV and a large number of cofactors. It forms dimeric complexes.

Its subcellular location is the cellular thylakoid membrane. One of the components of the core complex of photosystem II (PSII). PSII is a light-driven water:plastoquinone oxidoreductase that uses light energy to abstract electrons from H(2)O, generating O(2) and a proton gradient subsequently used for ATP formation. It consists of a core antenna complex that captures photons, and an electron transfer chain that converts photonic excitation into a charge separation. The chain is Photosystem II reaction center protein J from Prochlorococcus marinus (strain MIT 9215).